A 429-amino-acid polypeptide reads, in one-letter code: Histidine--tRNA ligase (429 aa).

The protein belongs to the class-II aminoacyl-tRNA synthetase family. As to quaternary structure, homodimer.

It localises to the cytoplasm. The catalysed reaction is tRNA(His) + L-histidine + ATP = L-histidyl-tRNA(His) + AMP + diphosphate + H(+). This chain is Histidine--tRNA ligase, found in Rippkaea orientalis (strain PCC 8801 / RF-1) (Cyanothece sp. (strain PCC 8801)).